The chain runs to 576 residues: Origin recognition complex subunit 2 (576 aa).

One copy of the Involved in LRWD1-binding repeat lies at 1-100 (MSTLRLKEAK…RNKVYSFQHR (100 aa)). Residue Thr-116 is modified to Phosphothreonine. A disordered region spans residues 119-218 (KIDPLASNDP…SQGQNRLLPA (100 aa)). Positions 149 to 161 (ENNNKNEFPSIQP) are enriched in polar residues. A compositionally biased stretch (acidic residues) spans 186–200 (SEDDEEVAKDDEEDT). Ser-246 bears the Phosphoserine mark.

Belongs to the ORC2 family. Component of ORC, a complex composed of at least 6 subunits: ORC1, ORC2, ORC3, ORC4, ORC5 and ORC6. ORC is regulated in a cell-cycle dependent manner. It is sequentially assembled at the exit from anaphase of mitosis and disassembled as cells enter S phase. Interacts with DBF4. Interacts with MCM10. Interacts with LRWD1 throughout the cell cycle; this interaction, which occurs only with non-ubiquitinated form of LRWD1, prevents LRWD1 ubiquitination and hence stabilizes the protein. Interacts with POLQ.

Its subcellular location is the nucleus. In terms of biological role, component of the origin recognition complex (ORC) that binds origins of replication. DNA-binding is ATP-dependent. The specific DNA sequences that define origins of replication have not been identified yet. ORC is required to assemble the pre-replication complex necessary to initiate DNA replication. Binds histone H3 and H4 trimethylation marks H3K9me3, H3K20me3 and H4K27me3. Stabilizes LRWD1, by protecting it from ubiquitin-mediated proteasomal degradation. Also stabilizes ORC3. The chain is Origin recognition complex subunit 2 (Orc2) from Rattus norvegicus (Rat).